We begin with the raw amino-acid sequence, 642 residues long: Mini-chromosome maintenance complex-binding protein (642 aa).

Residues 151-161 show a composition bias toward polar residues; the sequence is ARVSPSTSYTP. The interval 151–196 is disordered; the sequence is ARVSPSTSYTPSRHKRSYEDDEDMDLQPSKQKEQHPGSRQAGGLGG. Serine 154 carries the phosphoserine modification. A Phosphothreonine modification is found at threonine 160. Phosphoserine is present on residues serine 167 and serine 298.

Belongs to the MCMBP family. In terms of assembly, interacts with the MCM complex: associates with the MCM3-7 complex which lacks MCM2, while it does not interact with the MCM complex when MCM2 is present (MCM2-7 complex). Interacts with the RPA complex, when composed of all RPA1, RPA2 and RPA3 components, but not with RPA1 or RPA2 alone.

The protein resides in the nucleus. Associated component of the MCM complex that acts as a regulator of DNA replication. Binds to the MCM complex during late S phase and promotes the disassembly of the MCM complex from chromatin, thereby acting as a key regulator of pre-replication complex (pre-RC) unloading from replicated DNA. Can dissociate the MCM complex without addition of ATP; probably acts by destabilizing interactions of each individual subunits of the MCM complex. Required for sister chromatid cohesion. In Mus musculus (Mouse), this protein is Mini-chromosome maintenance complex-binding protein (Mcmbp).